Here is a 563-residue protein sequence, read N- to C-terminus: UvrABC system protein C (563 aa).

The 76-residue stretch at asparagine 12–alanine 87 folds into the GIY-YIG domain. Residues serine 194 to valine 229 enclose the UVR domain.

It belongs to the UvrC family. Interacts with UvrB in an incision complex.

The protein resides in the cytoplasm. Its function is as follows. The UvrABC repair system catalyzes the recognition and processing of DNA lesions. UvrC both incises the 5' and 3' sides of the lesion. The N-terminal half is responsible for the 3' incision and the C-terminal half is responsible for the 5' incision. The chain is UvrABC system protein C from Fervidobacterium nodosum (strain ATCC 35602 / DSM 5306 / Rt17-B1).